The sequence spans 430 residues: Tyrosine--tRNA ligase (430 aa).

Tyrosine 32 serves as a coordination point for L-tyrosine. Positions 37–46 match the 'HIGH' region motif; the sequence is PTADSLHIGH. Residues tyrosine 172 and glutamine 176 each contribute to the L-tyrosine site. The short motif at 232 to 236 is the 'KMSKS' region element; it reads KFGKT. Residue lysine 235 coordinates ATP. An S4 RNA-binding domain is found at 362–429; it reads VKAVDLFVDN…GKKNYFLLIA (68 aa).

The protein belongs to the class-I aminoacyl-tRNA synthetase family. TyrS type 1 subfamily. Homodimer.

It is found in the cytoplasm. It catalyses the reaction tRNA(Tyr) + L-tyrosine + ATP = L-tyrosyl-tRNA(Tyr) + AMP + diphosphate + H(+). In terms of biological role, catalyzes the attachment of tyrosine to tRNA(Tyr) in a two-step reaction: tyrosine is first activated by ATP to form Tyr-AMP and then transferred to the acceptor end of tRNA(Tyr). In Bacteroides thetaiotaomicron (strain ATCC 29148 / DSM 2079 / JCM 5827 / CCUG 10774 / NCTC 10582 / VPI-5482 / E50), this protein is Tyrosine--tRNA ligase.